Consider the following 284-residue polypeptide: 2-dehydro-3-deoxyphosphooctonate aldolase (284 aa).

It belongs to the KdsA family.

The protein resides in the cytoplasm. It carries out the reaction D-arabinose 5-phosphate + phosphoenolpyruvate + H2O = 3-deoxy-alpha-D-manno-2-octulosonate-8-phosphate + phosphate. It functions in the pathway carbohydrate biosynthesis; 3-deoxy-D-manno-octulosonate biosynthesis; 3-deoxy-D-manno-octulosonate from D-ribulose 5-phosphate: step 2/3. The protein operates within bacterial outer membrane biogenesis; lipopolysaccharide biosynthesis. The sequence is that of 2-dehydro-3-deoxyphosphooctonate aldolase from Pseudoalteromonas translucida (strain TAC 125).